Here is an 876-residue protein sequence, read N- to C-terminus: Alanine--tRNA ligase (876 aa).

N6-acetyllysine is present on Lys74. Residues His564, His568, Cys666, and His670 each coordinate Zn(2+).

This sequence belongs to the class-II aminoacyl-tRNA synthetase family. In terms of assembly, homotetramer. It depends on Zn(2+) as a cofactor.

Its subcellular location is the cytoplasm. It carries out the reaction tRNA(Ala) + L-alanine + ATP = L-alanyl-tRNA(Ala) + AMP + diphosphate. In terms of biological role, catalyzes the attachment of alanine to tRNA(Ala) in a two-step reaction: alanine is first activated by ATP to form Ala-AMP and then transferred to the acceptor end of tRNA(Ala). Also edits incorrectly charged Ser-tRNA(Ala) and Gly-tRNA(Ala) via its editing domain. The chain is Alanine--tRNA ligase from Shigella boydii serotype 18 (strain CDC 3083-94 / BS512).